We begin with the raw amino-acid sequence, 79 residues long: Small ribosomal subunit protein bS18 (79 aa).

This sequence belongs to the bacterial ribosomal protein bS18 family. In terms of assembly, part of the 30S ribosomal subunit. Forms a tight heterodimer with protein bS6.

Functionally, binds as a heterodimer with protein bS6 to the central domain of the 16S rRNA, where it helps stabilize the platform of the 30S subunit. The polypeptide is Small ribosomal subunit protein bS18 (Blochmanniella pennsylvanica (strain BPEN)).